A 165-amino-acid chain; its full sequence is HTH-type transcriptional regulator MmpR5 (165 aa).

The HTH marR-type domain occupies 1 to 151 (MSVNDGVDQM…LLAYMENVVS (151 aa)). The segment at residues 53-76 (SEELATALAASSGGISTNARMLIQ) is a DNA-binding region (H-T-H motif).

As to quaternary structure, homodimer.

In terms of biological role, controls the expression level of the Mmps2-MmpL2, MmpS4-MmpL4, and MmpS5-MmpL5 transport systems. Also controls its own expression. Acts by binding directly to the promoter regions. The sequence is that of HTH-type transcriptional regulator MmpR5 from Mycobacterium tuberculosis (strain ATCC 25618 / H37Rv).